We begin with the raw amino-acid sequence, 190 residues long: MSRHVFLTGPPGVGKTTLIQKAIEVLQSSGLPVDGFYTQEVRQEGKRIGFDVVTLSGAQGPLSRVGSQPLPGKPECRVGQYVVNLDSFEQLALPVLRNAGSSCGPKHRVCIIDEIGKMELFSQPFIQAVRQMLSTPGIIVVGTIPVPKGKPLALVEEIRKRRDVKVFNVTRDNRNSLLPDIVAVVQSSRT.

Residues 9–16 and 109–116 contribute to the ATP site; these read GPPGVGKT and VCIIDEIG. Lys-165 is subject to N6-acetyllysine.

This sequence belongs to the THEP1 NTPase family. In terms of assembly, monomer.

The catalysed reaction is a ribonucleoside 5'-triphosphate + H2O = a ribonucleoside 5'-diphosphate + phosphate + H(+). It carries out the reaction 5-methyl-UTP + H2O = 5-methyl-UDP + phosphate + H(+). It catalyses the reaction CTP + H2O = CDP + phosphate + H(+). The enzyme catalyses ATP + H2O = ADP + phosphate + H(+). The catalysed reaction is GTP + H2O = GDP + phosphate + H(+). Has nucleotide phosphatase activity towards ATP, GTP, CTP, TTP and UTP. Hydrolyzes nucleoside diphosphates with lower efficiency. The sequence is that of Cancer-related nucleoside-triphosphatase homolog from Mus musculus (Mouse).